Here is a 291-residue protein sequence, read N- to C-terminus: 4-diphosphocytidyl-2-C-methyl-D-erythritol kinase (291 aa).

K11 is an active-site residue. 97–107 (PVAAGIGGGSS) serves as a coordination point for ATP. D139 is a catalytic residue.

The protein belongs to the GHMP kinase family. IspE subfamily.

It carries out the reaction 4-CDP-2-C-methyl-D-erythritol + ATP = 4-CDP-2-C-methyl-D-erythritol 2-phosphate + ADP + H(+). It participates in isoprenoid biosynthesis; isopentenyl diphosphate biosynthesis via DXP pathway; isopentenyl diphosphate from 1-deoxy-D-xylulose 5-phosphate: step 3/6. In terms of biological role, catalyzes the phosphorylation of the position 2 hydroxy group of 4-diphosphocytidyl-2C-methyl-D-erythritol. The protein is 4-diphosphocytidyl-2-C-methyl-D-erythritol kinase of Methylorubrum extorquens (strain CM4 / NCIMB 13688) (Methylobacterium extorquens).